The primary structure comprises 606 residues: Double-stranded RNA-binding protein Staufen homolog 2 (606 aa).

DRBM domains lie at 8–75 and 95–181; these read TPMC…ESSL and TPTV…ALKN. Disordered regions lie at residues 57–97 and 177–205; these read SIKK…ITPT and QALK…SDAS. Residues 85–97 show a composition bias toward polar residues; that stretch reads ADSNSNPGSITPT. Residues 192 to 205 show a composition bias toward basic and acidic residues; it reads SEEKKETEENSDAS. DRBM domains are found at residues 207–274, 307–375, and 493–557; these read SEIS…ELKK, NPIS…QLGY, and QPSQ…QLSE. Residues 580–606 form a disordered region; sequence RLAERTESKPTNSGTTAQDCKDSKAVV. Over residues 588–597 the composition is skewed to polar residues; sequence KPTNSGTTAQ.

Functionally, RNA-binding protein required for the microtubule-dependent transport of RNAs within polarized cell types. The chain is Double-stranded RNA-binding protein Staufen homolog 2 (stau2) from Danio rerio (Zebrafish).